The following is a 277-amino-acid chain: Mitochondrial outer membrane protein porin 5 (277 aa).

The protein belongs to the eukaryotic mitochondrial porin (TC 1.B.8.1) family.

The protein resides in the mitochondrion outer membrane. Functionally, forms a channel through the mitochondrial outer membrane that allows diffusion of small hydrophilic molecules. The channel adopts an open conformation at low or zero membrane potential and a closed conformation at potentials above 30-40 mV. The open state has a weak anion selectivity whereas the closed state is cation-selective. The polypeptide is Mitochondrial outer membrane protein porin 5 (VDAC5) (Oryza sativa subsp. japonica (Rice)).